The chain runs to 909 residues: Protein translocase subunit SecA (909 aa).

ATP contacts are provided by residues glutamine 87, 105-109 (GEGKT), and aspartate 513. Residues 834-909 (QEEVERMEEQ…KYKQCHGKID (76 aa)) are disordered. A compositionally biased stretch (basic and acidic residues) spans 836–853 (EVERMEEQRRAQAEEAAR). The span at 854–863 (RAQAQHAAAQ) shows a compositional bias: low complexity. Residues 874–889 (EGAHQPMVREERKVGR) are compositionally biased toward basic and acidic residues. The Zn(2+) site is built by cysteine 893, cysteine 895, cysteine 904, and histidine 905. Over residues 899–909 (KKYKQCHGKID) the composition is skewed to basic residues.

This sequence belongs to the SecA family. In terms of assembly, monomer and homodimer. Part of the essential Sec protein translocation apparatus which comprises SecA, SecYEG and auxiliary proteins SecDF-YajC and YidC. Zn(2+) is required as a cofactor.

The protein resides in the cell inner membrane. It is found in the cytoplasm. It catalyses the reaction ATP + H2O + cellular proteinSide 1 = ADP + phosphate + cellular proteinSide 2.. Its function is as follows. Part of the Sec protein translocase complex. Interacts with the SecYEG preprotein conducting channel. Has a central role in coupling the hydrolysis of ATP to the transfer of proteins into and across the cell membrane, serving both as a receptor for the preprotein-SecB complex and as an ATP-driven molecular motor driving the stepwise translocation of polypeptide chains across the membrane. The protein is Protein translocase subunit SecA of Vibrio campbellii (strain ATCC BAA-1116).